The chain runs to 201 residues: Peptidyl-tRNA hydrolase (201 aa).

Y14 is a binding site for tRNA. Residue H19 is the Proton acceptor of the active site. The tRNA site is built by Y64, N66, and N112.

The protein belongs to the PTH family. Monomer.

It is found in the cytoplasm. It catalyses the reaction an N-acyl-L-alpha-aminoacyl-tRNA + H2O = an N-acyl-L-amino acid + a tRNA + H(+). Functionally, hydrolyzes ribosome-free peptidyl-tRNAs (with 1 or more amino acids incorporated), which drop off the ribosome during protein synthesis, or as a result of ribosome stalling. Its function is as follows. Catalyzes the release of premature peptidyl moieties from peptidyl-tRNA molecules trapped in stalled 50S ribosomal subunits, and thus maintains levels of free tRNAs and 50S ribosomes. The polypeptide is Peptidyl-tRNA hydrolase (Bradyrhizobium diazoefficiens (strain JCM 10833 / BCRC 13528 / IAM 13628 / NBRC 14792 / USDA 110)).